The following is a 238-amino-acid chain: tRNA (guanine-N(7)-)-methyltransferase (238 aa).

Residues Glu70, Asp95, Asp122, and Asp145 each contribute to the S-adenosyl-L-methionine site. The active site involves Asp145. Substrate-binding positions include Lys149, Asp181, and 216–219; that span reads TKFE.

The protein belongs to the class I-like SAM-binding methyltransferase superfamily. TrmB family.

The enzyme catalyses guanosine(46) in tRNA + S-adenosyl-L-methionine = N(7)-methylguanosine(46) in tRNA + S-adenosyl-L-homocysteine. Its pathway is tRNA modification; N(7)-methylguanine-tRNA biosynthesis. Functionally, catalyzes the formation of N(7)-methylguanine at position 46 (m7G46) in tRNA. The polypeptide is tRNA (guanine-N(7)-)-methyltransferase (Neisseria meningitidis serogroup B (strain ATCC BAA-335 / MC58)).